The primary structure comprises 282 residues: uncharacterized protein (282 aa).

To M.tuberculosis Rv2161c and Rv3079c.

This is an uncharacterized protein from Mycobacterium tuberculosis (strain CDC 1551 / Oshkosh).